The chain runs to 78 residues: Translation initiation factor IF-1 (78 aa).

One can recognise an S1-like domain in the interval 4–78 (KFNNQAKQDK…LKLGRIIGRK (75 aa)).

It belongs to the IF-1 family. In terms of assembly, component of the 30S ribosomal translation pre-initiation complex which assembles on the 30S ribosome in the order IF-2 and IF-3, IF-1 and N-formylmethionyl-tRNA(fMet); mRNA recruitment can occur at any time during PIC assembly.

The protein resides in the cytoplasm. In terms of biological role, one of the essential components for the initiation of protein synthesis. Stabilizes the binding of IF-2 and IF-3 on the 30S subunit to which N-formylmethionyl-tRNA(fMet) subsequently binds. Helps modulate mRNA selection, yielding the 30S pre-initiation complex (PIC). Upon addition of the 50S ribosomal subunit IF-1, IF-2 and IF-3 are released leaving the mature 70S translation initiation complex. This chain is Translation initiation factor IF-1, found in Mycoplasma pneumoniae (strain ATCC 29342 / M129 / Subtype 1) (Mycoplasmoides pneumoniae).